The following is a 252-amino-acid chain: Trans-aconitate 2-methyltransferase (252 aa).

This sequence belongs to the methyltransferase superfamily. Tam family.

Its subcellular location is the cytoplasm. It carries out the reaction trans-aconitate + S-adenosyl-L-methionine = (E)-3-(methoxycarbonyl)pent-2-enedioate + S-adenosyl-L-homocysteine. In terms of biological role, catalyzes the S-adenosylmethionine monomethyl esterification of trans-aconitate. This is Trans-aconitate 2-methyltransferase from Escherichia coli O1:K1 / APEC.